Consider the following 78-residue polypeptide: Dihydrofolate reductase type 2 (78 aa).

Residues 32 to 36 and 66 to 69 contribute to the NADP(+) site; these read KKSGA and VQIY. Residue Ile-68 participates in substrate binding.

Homotetramer.

The catalysed reaction is (6S)-5,6,7,8-tetrahydrofolate + NADP(+) = 7,8-dihydrofolate + NADPH + H(+). It functions in the pathway cofactor biosynthesis; tetrahydrofolate biosynthesis; 5,6,7,8-tetrahydrofolate from 7,8-dihydrofolate: step 1/1. Key enzyme in folate metabolism. Catalyzes an essential reaction for de novo glycine and purine synthesis, and for DNA precursor synthesis. In Escherichia coli, this protein is Dihydrofolate reductase type 2.